The sequence spans 1463 residues: Secretory phospholipase A2 receptor (1463 aa).

Positions 1 to 20 (MLLSPSLLLLLLLGAPRGCA) are cleaved as a signal peptide. Residues 21–1397 (EGVAAALTPE…ALPEKGPSHS (1377 aa)) are Extracellular-facing. Residues 38-161 (KGIFVIQSES…GSGGGDICEY (124 aa)) form the Ricin B-type lectin domain. Disulfide bonds link cysteine 51-cysteine 64, cysteine 89-cysteine 106, cysteine 178-cysteine 204, cysteine 192-cysteine 219, cysteine 260-cysteine 354, cysteine 330-cysteine 346, cysteine 406-cysteine 501, cysteine 478-cysteine 493, cysteine 617-cysteine 634, cysteine 699-cysteine 796, cysteine 774-cysteine 788, cysteine 840-cysteine 937, cysteine 914-cysteine 929, and cysteine 1067-cysteine 1087. Asparagine 93 carries an N-linked (GlcNAc...) asparagine glycan. The Fibronectin type-II domain maps to 173 to 221 (THGMPCMFPFQYNHQWHHECTREGREDDLLWCATTSRYERDEKWGFCPD). 8 consecutive C-type lectin domains span residues 238-355 (NSHI…YICK), 385-502 (YNRN…YICK), 522-643 (HGGF…MSLC), 673-797 (GLAS…WICK), 819-938 (YQDA…SICK), 965-1096 (FNYK…GFVC), 1121-1232 (YGNR…GAIC), and 1257-1378 (FKSN…FICK). N-linked (GlcNAc...) asparagine glycosylation is present at asparagine 454. N-linked (GlcNAc...) asparagine glycosylation is present at asparagine 1123. 3 cysteine pairs are disulfide-bonded: cysteine 1209-cysteine 1223, cysteine 1280-cysteine 1377, and cysteine 1354-cysteine 1369. Residues 1398 to 1418 (IIPLAVVLTLIVIVAICTLSF) form a helical membrane-spanning segment. Over 1419-1463 (CIYKHNGGFFRRLAGFRNPYYPATNFSTVYLEENILISDLEKSDQ) the chain is Cytoplasmic. The Endocytosis signal signature appears at 1436–1442 (NPYYPAT).

Interacts with sPLA2-IB/PLA2G1B; this interaction mediates intracellular signaling as well as clearance of extracellular sPLA2-IB/PLA2G1B via endocytotic pathway. Interacts with sPLA2-X/PLA2G10; this interaction mediates sPLA2-X/PLA2G10 clearance and inactivation. In terms of processing, the secretory phospholipase A2 receptor form may be produced by the action of metalloproteinases. It contains all extracellular domains and only lacks transmembrane and cytosolic regions. It is however unclear whether this form is produced by proteolytic cleavage as suggested by some experiments, or by alternative splicing, as in the case of isoform 2 that shares all characteristics of secretory phospholipase A2 receptor form. In terms of tissue distribution, expressed in podocytes (at protein level). Present in lung macrophage (at protein level). Highly expressed in kidney. Also expressed in pancreas, amnion, choriodecidua and placenta. Isoform 2 is expressed at much lower level.

Its subcellular location is the cell membrane. The protein resides in the secreted. Its function is as follows. Receptor for secretory phospholipase A2 (sPLA2). Acts as a receptor for phospholipase sPLA2-IB/PLA2G1B but not sPLA2-IIA/PLA2G2A. Also able to bind to snake PA2-like toxins. Although its precise function remains unclear, binding of sPLA2 to its receptor participates in both positive and negative regulation of sPLA2 functions as well as clearance of sPLA2. Binding of sPLA2-IB/PLA2G1B induces various effects depending on the cell type, such as activation of the mitogen-activated protein kinase (MAPK) cascade to induce cell proliferation, the production of lipid mediators, selective release of arachidonic acid in bone marrow-derived mast cells. In neutrophils, binding of sPLA2-IB/PLA2G1B can activate p38 MAPK to stimulate elastase release and cell adhesion. May be involved in responses in pro-inflammatory cytokine productions during endotoxic shock. Also has endocytic properties and rapidly internalizes sPLA2 ligands, which is particularly important for the clearance of extracellular sPLA2s to protect their potent enzymatic activities. The soluble secretory phospholipase A2 receptor form is circulating and acts as a negative regulator of sPLA2 functions by blocking the biological functions of sPLA2-IB/PLA2G1B. In podocytes, binding of sPLA2-IB/PLA2G1B can regulate podocyte survival and glomerular homeostasis. The polypeptide is Secretory phospholipase A2 receptor (PLA2R1) (Homo sapiens (Human)).